The following is a 365-amino-acid chain: Uroporphyrinogen decarboxylase (365 aa).

Residues 27–31 (RQAGR), Asp77, Tyr154, Thr209, and His327 contribute to the substrate site.

This sequence belongs to the uroporphyrinogen decarboxylase family. Homodimer.

The protein resides in the cytoplasm. It carries out the reaction uroporphyrinogen III + 4 H(+) = coproporphyrinogen III + 4 CO2. It functions in the pathway porphyrin-containing compound metabolism; protoporphyrin-IX biosynthesis; coproporphyrinogen-III from 5-aminolevulinate: step 4/4. Its function is as follows. Catalyzes the decarboxylation of four acetate groups of uroporphyrinogen-III to yield coproporphyrinogen-III. The polypeptide is Uroporphyrinogen decarboxylase (Nitrosospira multiformis (strain ATCC 25196 / NCIMB 11849 / C 71)).